We begin with the raw amino-acid sequence, 232 residues long: Large ribosomal subunit protein uL1 (232 aa).

This sequence belongs to the universal ribosomal protein uL1 family. Part of the 50S ribosomal subunit.

In terms of biological role, binds directly to 23S rRNA. The L1 stalk is quite mobile in the ribosome, and is involved in E site tRNA release. Functionally, protein L1 is also a translational repressor protein, it controls the translation of the L11 operon by binding to its mRNA. In Coxiella burnetii (strain CbuK_Q154) (Coxiella burnetii (strain Q154)), this protein is Large ribosomal subunit protein uL1.